We begin with the raw amino-acid sequence, 295 residues long: Probable isochorismatase (295 aa).

Positions 1–21 (MGIPKIAGYPLPTPAEFPDNR) are disordered. In terms of domain architecture, Carrier spans 207–286 (EIRSQKPLTL…EWWLVIEQAR (80 aa)). Ser247 is subject to O-(pantetheine 4'-phosphoryl)serine.

This sequence belongs to the isochorismatase family. The cofactor is pantetheine 4'-phosphate.

The enzyme catalyses isochorismate + H2O = (2S,3S)-2,3-dihydroxy-2,3-dihydrobenzoate + pyruvate. The protein operates within siderophore biosynthesis; vulnibactin biosynthesis. Involved in the biosynthesis of the catechol siderophore vulnibactin. Vulnibactin is a chelating compound involved in transporting iron from the bacterial environment into the cell cytoplasm. This Vibrio vulnificus (strain CMCP6) protein is Probable isochorismatase (venB).